The sequence spans 88 residues: Putative membrane protein insertion efficiency factor (88 aa).

The protein belongs to the UPF0161 family.

The protein resides in the cell inner membrane. In terms of biological role, could be involved in insertion of integral membrane proteins into the membrane. This chain is Putative membrane protein insertion efficiency factor, found in Coxiella burnetii (strain Dugway 5J108-111).